The chain runs to 83 residues: uncharacterized protein (83 aa).

This is an uncharacterized protein from Escherichia coli (strain K12).